A 184-amino-acid polypeptide reads, in one-letter code: H(2)/formate:CoB-CoM heterodisulfide,ferredoxin reductase subunit C2 (184 aa).

4Fe-4S ferredoxin-type domains follow at residues 24 to 54 and 65 to 97; these read GEKE…AYRT and IDSV…TEII. Residues cysteine 34, cysteine 37, cysteine 40, cysteine 44, cysteine 77, cysteine 80, cysteine 83, and cysteine 87 each contribute to the [4Fe-4S] cluster site.

The protein belongs to the HdrC family. As to quaternary structure, the heterodisulfide reductase is composed of three subunits; HdrA, HdrB and HdrC. B1 and B2 subunits are interchangeable, as are the C1 and C2 subunits. The heterodisulfide reductase forms a supercomplex with formylmethanofuran dehydrogenase (Fwd), F(420)-non-reducing hydrogenase (Vhu) and formate dehydrogenase (Fdh). [4Fe-4S] cluster is required as a cofactor.

It carries out the reaction coenzyme B + coenzyme M + 2 reduced [2Fe-2S]-[ferredoxin] + 2 H(+) = coenzyme M-coenzyme B heterodisulfide + 2 H2 + 2 oxidized [2Fe-2S]-[ferredoxin]. The catalysed reaction is coenzyme B + coenzyme M + 2 reduced [2Fe-2S]-[ferredoxin] + 2 CO2 = coenzyme M-coenzyme B heterodisulfide + 2 formate + 2 oxidized [2Fe-2S]-[ferredoxin]. The protein operates within cofactor metabolism; coenzyme M-coenzyme B heterodisulfide reduction; coenzyme B and coenzyme M from coenzyme M-coenzyme B heterodisulfide: step 1/1. In terms of biological role, part of a complex that catalyzes the reversible reduction of CoM-S-S-CoB to the thiol-coenzymes H-S-CoM (coenzyme M) and H-S-CoB (coenzyme B). The protein is H(2)/formate:CoB-CoM heterodisulfide,ferredoxin reductase subunit C2 of Methanococcus maripaludis (strain DSM 14266 / JCM 13030 / NBRC 101832 / S2 / LL).